A 312-amino-acid polypeptide reads, in one-letter code: Homoserine O-acetyltransferase (312 aa).

The Acyl-thioester intermediate role is filled by Cys-142. Residues Lys-163 and Ser-194 each contribute to the substrate site. The active-site Proton acceptor is His-237. Residue Glu-239 is part of the active site. Arg-251 contributes to the substrate binding site.

Belongs to the MetA family.

The protein resides in the cytoplasm. It catalyses the reaction L-homoserine + acetyl-CoA = O-acetyl-L-homoserine + CoA. Its pathway is amino-acid biosynthesis; L-methionine biosynthesis via de novo pathway; O-acetyl-L-homoserine from L-homoserine: step 1/1. Functionally, transfers an acetyl group from acetyl-CoA to L-homoserine, forming acetyl-L-homoserine. This is Homoserine O-acetyltransferase from Catenibacterium mitsuokai (strain DSM 15897 / JCM 10609 / CCUG 48821 A / CIP 106738 / RCA14-39).